Here is a 373-residue protein sequence, read N- to C-terminus: MALRCWDAARSLGSRIFGRYACSVRALSSLPDEKKKFLHNGPDLQDFVSGDLADKSTWDDYKGNLKRQKGERLRLPPWLKTKIPMGKNYNKLKNTLRNLNLHTVCEEARCPNIGECWGGGEYATATATIMLMGDTCTRGCRFCSVKTARNPPPLDPSEPDNTARAIAEWGLDYVVLTSVDRDDVVDGGAEHIAKTVSCLKERNPKILVECLTPDFRGDLRAVEKVALSGLDVYAHNVETVPELQRKVRDPRANFDQSLRVLKHAKEVQPDVVSKTSIMLGLGETDEQVYATMKALRAADVDCLTLGQYMQPTKRHLKVEEYVTPEKFKYWEEVGNELGFHYTASGPLVRSSYKAGEFFLKNLVAKRKTKVSKV.

A mitochondrion-targeting transit peptide spans 1-26 (MALRCWDAARSLGSRIFGRYACSVRA). [4Fe-4S] cluster is bound by residues Cys105, Cys110, Cys116, Cys136, Cys140, Cys143, and Ser351. The region spanning 121–340 (EYATATATIM…EEVGNELGFH (220 aa)) is the Radical SAM core domain.

It belongs to the radical SAM superfamily. Lipoyl synthase family. It depends on [4Fe-4S] cluster as a cofactor.

The protein resides in the mitochondrion. It carries out the reaction [[Fe-S] cluster scaffold protein carrying a second [4Fe-4S](2+) cluster] + N(6)-octanoyl-L-lysyl-[protein] + 2 oxidized [2Fe-2S]-[ferredoxin] + 2 S-adenosyl-L-methionine + 4 H(+) = [[Fe-S] cluster scaffold protein] + N(6)-[(R)-dihydrolipoyl]-L-lysyl-[protein] + 4 Fe(3+) + 2 hydrogen sulfide + 2 5'-deoxyadenosine + 2 L-methionine + 2 reduced [2Fe-2S]-[ferredoxin]. The protein operates within protein modification; protein lipoylation via endogenous pathway; protein N(6)-(lipoyl)lysine from octanoyl-[acyl-carrier-protein]: step 2/2. Its function is as follows. Catalyzes the radical-mediated insertion of two sulfur atoms into the C-6 and C-8 positions of the octanoyl moiety bound to the lipoyl domains of lipoate-dependent enzymes, thereby converting the octanoylated domains into lipoylated derivatives. This Rattus norvegicus (Rat) protein is Lipoyl synthase, mitochondrial (Lias).